Reading from the N-terminus, the 129-residue chain is Large ribosomal subunit protein bL20 (129 aa).

The segment covering methionine 1–valine 17 has biased composition (basic residues). The disordered stretch occupies residues methionine 1–serine 29.

The protein belongs to the bacterial ribosomal protein bL20 family.

In terms of biological role, binds directly to 23S ribosomal RNA and is necessary for the in vitro assembly process of the 50S ribosomal subunit. It is not involved in the protein synthesizing functions of that subunit. This Mycobacterium ulcerans (strain Agy99) protein is Large ribosomal subunit protein bL20.